A 932-amino-acid chain; its full sequence is DNA mismatch repair protein MutS (932 aa).

Residue 615 to 622 (GPNMAGKS) coordinates ATP.

The protein belongs to the DNA mismatch repair MutS family.

Its function is as follows. This protein is involved in the repair of mismatches in DNA. It is possible that it carries out the mismatch recognition step. This protein has a weak ATPase activity. In Clostridium botulinum (strain Kyoto / Type A2), this protein is DNA mismatch repair protein MutS.